The chain runs to 763 residues: Phosphoglycerol transferase I (763 aa).

Transmembrane regions (helical) follow at residues 1–21, 26–46, 77–97, and 108–128; these read MSELLSFALFLASVLIYAWKA, WWFAATLTVLGLFVVLNITLF, ILPGIGIVLGLTAVFGALGWI, and FGYSLLALLLALGSVDASPAF.

Belongs to the OpgB family.

The protein resides in the cell inner membrane. It catalyses the reaction a phosphatidylglycerol + a membrane-derived-oligosaccharide D-glucose = a 1,2-diacyl-sn-glycerol + a membrane-derived-oligosaccharide 6-(glycerophospho)-D-glucose.. It participates in glycan metabolism; osmoregulated periplasmic glucan (OPG) biosynthesis. Transfers a phosphoglycerol residue from phosphatidylglycerol to the membrane-bound nascent glucan backbones. In Escherichia coli (strain SMS-3-5 / SECEC), this protein is Phosphoglycerol transferase I.